Reading from the N-terminus, the 43-residue chain is Potassium channel toxin gamma-KTx 4.5 (43 aa).

4 disulfide bridges follow: cysteine 5–cysteine 23, cysteine 11–cysteine 34, cysteine 20–cysteine 39, and cysteine 24–cysteine 41.

The protein belongs to the ergtoxin family. Gamma-KTx 4 subfamily. In terms of tissue distribution, expressed by the venom gland.

It localises to the secreted. Reversibly blocks Kv11/ERG potassium channels. The sequence is that of Potassium channel toxin gamma-KTx 4.5 from Centruroides exilicauda (Bark scorpion).